The primary structure comprises 137 residues: 14 kDa proline-rich protein DC2.15 (137 aa).

Positions 1-25 are cleaved as a signal peptide; that stretch reads MGSKNSASVALFFTLNILFFALVSS. The segment at 30–53 is disordered; the sequence is PDPYKPKPKPTPKPTPTPYPSAGK. Residues 38–48 show a composition bias toward pro residues; that stretch reads KPTPKPTPTPY. Residues 88-104 form a helical membrane-spanning segment; the sequence is LEGLVNLEAAVCLCTAI.

It localises to the membrane. Functionally, may be connected with the initiation of embryogenesis or with the metabolic changes produced by the removal of auxins. This chain is 14 kDa proline-rich protein DC2.15, found in Daucus carota (Wild carrot).